The chain runs to 115 residues: MSNPALQAYRTALRATRVAFNGDNFVLKSARAKIREGLLSNRDLADKMEVEKKVAELNEVAQFLVKNIVQGEKEEGKDRYLLKIHDKTELGSNETIKQSKANLGSLAGAKVKRCS.

A mitochondrion-targeting transit peptide spans Met1–Ala15.

It belongs to the complex I LYR family. MZM1 subfamily. In terms of assembly, interacts with RIP1.

Its subcellular location is the mitochondrion matrix. In terms of biological role, assembly factor required for Rieske Fe-S protein RIP1 incorporation into the cytochrome b-c1 (CIII) complex. Functions as a chaperone, binding to this subunit within the mitochondrial matrix and stabilizing it prior to its translocation and insertion into the late CIII dimeric intermediate within the mitochondrial inner membrane. Modulates the mitochondrial matrix zinc pool. This chain is Mitochondrial zinc maintenance protein 1, mitochondrial (MZM1), found in Clavispora lusitaniae (strain ATCC 42720) (Yeast).